Reading from the N-terminus, the 457-residue chain is Methylphosphonate synthase (457 aa).

Residues 23–74 (ILNDIKRRPEDAANELGVSIEEINSIISGKQKISPSLIEKAVNIWPVNERDF) enclose the HTH cro/C1-type 1 domain. Residues 32-50 (EDAANELGVSIEEINSIIS) constitute a DNA-binding region (H-T-H motif). Residues His148 and His190 each coordinate Fe cation. One can recognise an HTH cro/C1-type 2 domain in the interval 247 to 301 (LEYYFELSNLTKEKFAKRTNFSMETLADFFTKKKLPTFDELKIIAKALNVNSRDL). Positions 258-277 (KEKFAKRTNFSMETLADFFT) form a DNA-binding region, H-T-H motif.

Belongs to the non-heme iron-dependent dioxygenase family. Fe(2+) is required as a cofactor.

It catalyses the reaction 2-hydroxyethylphosphonate + O2 = methylphosphonate + hydrogencarbonate + H(+). The protein operates within phosphorus metabolism; phosphonate biosynthesis. Its function is as follows. Catalyzes the conversion of 2-hydroxyethylphosphonate into methylphosphonate in the methylphosphonate biosynthesis pathway. The polypeptide is Methylphosphonate synthase (mpnS) (Nitrosopumilus maritimus (strain SCM1)).